A 717-amino-acid chain; its full sequence is DNA polymerase iota (717 aa).

The segment at 1 to 22 (MEPLHAGAAGSSRAVCSQGPPT) is disordered. Residues 30–243 (IVHVDLDCFY…NHIKEIPGIG (214 aa)) enclose the UmuC domain. Aspartate 34 and leucine 35 together coordinate Mg(2+). 2 residues coordinate a 2'-deoxyribonucleoside 5'-triphosphate: tyrosine 39 and arginine 71. Aspartate 126 contacts Mg(2+). Glutamate 127 acts as the Proton acceptor in catalysis. DNA-binding regions lie at residues 300-307 (QSFSEEDT) and 343-360 (RLVIRRYSDKHCNRESRQ). The Ubiquitin-binding 1 (UBM1) signature appears at 500–517 (VDQEVFKQLPADIQEEIL). 3 disordered regions span residues 549–589 (QMQA…SHPS), 603–622 (KDEQTSQGPTESQGCQFSST), and 644–687 (HRTV…DIDP). Residues 575–589 (PGTSGLSPGSTSHPS) are compositionally biased toward low complexity. 2 stretches are compositionally biased toward polar residues: residues 607–622 (TSQGPTESQGCQFSST) and 652–662 (QTATASHQGLE). The segment covering 665 to 679 (QGLESRELDSAEEKL) has biased composition (basic and acidic residues). A Ubiquitin-binding 2 (UBM2) motif is present at residues 685 to 702 (IDPQVFYELPEEVQKELM).

This sequence belongs to the DNA polymerase type-Y family. As to quaternary structure, interacts with POLH. Interacts with REV1. Interacts with ubiquitin. Mg(2+) is required as a cofactor. Requires Mn(2+) as cofactor. In terms of processing, monoubiquitinated. Protein monoubiquitination prevents POLI binding to ubiquitin via the ubiquitin-binding motif 1 and ubiquitin-binding motif 2. As to expression, detected in testis, and at very low levels in spleen, lung and brain. Detected in round spermatids, but not in prophase spermatocytes.

The protein localises to the nucleus. It catalyses the reaction DNA(n) + a 2'-deoxyribonucleoside 5'-triphosphate = DNA(n+1) + diphosphate. Its function is as follows. Error-prone DNA polymerase specifically involved in DNA repair. Plays an important role in translesion synthesis, where the normal high-fidelity DNA polymerases cannot proceed and DNA synthesis stalls. Favors Hoogsteen base-pairing in the active site. Inserts the correct base with high-fidelity opposite an adenosine template. Exhibits low fidelity and efficiency opposite a thymidine template, where it will preferentially insert guanosine. May play a role in hypermutation of immunoglobulin genes. Forms a Schiff base with 5'-deoxyribose phosphate at abasic sites, but may not have lyase activity. The chain is DNA polymerase iota (Poli) from Mus musculus (Mouse).